A 35-amino-acid polypeptide reads, in one-letter code: ECRYLFGGCSSTSDCCKHLSCRSDWKYCAWDGTFS.

Intrachain disulfides connect Cys2–Cys16, Cys9–Cys21, and Cys15–Cys28.

The protein belongs to the neurotoxin 10 (Hwtx-1) family. 09 (HaTx) subfamily. In terms of tissue distribution, expressed by the venom gland.

The protein resides in the secreted. In terms of biological role, gating-modifier toxin that potently inhibits inactivation of the mammalian Nav1.1/SCN1A sodium channel (EC(50)=38 nM). Also moderately inhibits inactivation of Nav1.2/SCN2A (EC(50)=236 nM) and Nav1.3/SCN3A (EC(50)=220 nM) when the channels are expressed in oocytes without the beta-1 auxiliary subunit. Does not inhibit inactivation of Nav1.2/SCN2A when the channel is coexpressed with the beta-1 auxiliary subunit. When tested on Nav1.1/SCN1A channel, it enhances peak current amplitude and potently delays channel inactivation in a dose-dependent manner, leading to a large sustained current. It has no effect on the voltage-dependence of steady-state activation, and induces a depolarizing shift in the voltage dependence of inactivation. In addition, it does not modify the recovery from fast inactivation in Nav1.1/SCN1A. The binding affinity and subtype selectivity of the toxin towards Nav1.1/SCN1A channel is determined by residues within both the S1-S2 and S3-S4 loops of the domain IV voltage sensor of the channel. This toxin also weakly inhibits several subtypes of voltage-gated potassium channels. It moderately blocks Kv2.1/KCNB1 (23% inhibition at 100 nM), Kv2.2/KCNB2 (19.7% at 100 nM and 51% at 300 nM), Kv4.1/KCND1 (IC(50)=280 nM), Kv4.2/KCND2 (39% at 300 nM) and Kv4.3/KCND3 (43% at 300 nM). In vivo, intracerebroventricular injection into mice elicits convulsions, spasms, tremors and rapid death. When injected into mouse hindpaw, the toxin elicits an immediate and robust response to pain. However, intraplantar injection of toxin does not cause neurogenic inflammation or alter sensitivity to heat, indicative of a modality-specific effect on mechanosensitive neurons. In Dravet syndrome mice model, intracerebroventricular infusion of this peptide rescues mice from seizures and premature death. The protein is Delta-theraphotoxin-Hm1a of Heteroscodra maculata (Togo starburst tarantula).